Here is a 1167-residue protein sequence, read N- to C-terminus: Topoisomerase 1-associated factor 1 (1167 aa).

Disordered stretches follow at residues 332-353 (SKRWNKPRRGRKAQDMSVNNDF), 563-594 (SRRRARKRKREEQLVNKGSDEEQESEDEDYAE), 889-969 (KYSH…LENT), 981-1093 (YVHA…DAID), and 1105-1167 (FDDD…SDSE). A compositionally biased stretch (basic and acidic residues) spans 572–582 (REEQLVNKGSD). 2 stretches are compositionally biased toward acidic residues: residues 583–593 (EEQESEDEDYA) and 949–958 (EEEPVDEETL). 2 stretches are compositionally biased toward basic and acidic residues: residues 959 to 969 (EERRQARLENT) and 996 to 1013 (EFFRLEEERRNEQSERIK). The span at 1062-1074 (ELEEDDILMDDME) shows a compositional bias: acidic residues. The segment covering 1078–1088 (RASSGEYSSND) has biased composition (polar residues). A compositionally biased stretch (basic and acidic residues) spans 1110 to 1127 (AFGRDRDKDETSVDRDGA).

It belongs to the timeless family.

Its subcellular location is the nucleus. Involved in chromosome segregation during meiosis and DNA damage repair. The sequence is that of Topoisomerase 1-associated factor 1 (tof1) from Emericella nidulans (strain FGSC A4 / ATCC 38163 / CBS 112.46 / NRRL 194 / M139) (Aspergillus nidulans).